The following is a 193-amino-acid chain: NAD(P)H-quinone oxidoreductase subunit I (193 aa).

4Fe-4S ferredoxin-type domains follow at residues 55–84 and 95–124; these read GRIH…VDWE and KHYS…MTEE. Cys-64, Cys-67, Cys-70, Cys-74, Cys-104, Cys-107, Cys-110, and Cys-114 together coordinate [4Fe-4S] cluster. The segment at 169-193 is disordered; the sequence is LDPHDLPSGNQRSGKRPEEIIAESD.

It belongs to the complex I 23 kDa subunit family. NDH-1 is composed of at least 11 different subunits. It depends on [4Fe-4S] cluster as a cofactor.

It is found in the cellular thylakoid membrane. The catalysed reaction is a plastoquinone + NADH + (n+1) H(+)(in) = a plastoquinol + NAD(+) + n H(+)(out). The enzyme catalyses a plastoquinone + NADPH + (n+1) H(+)(in) = a plastoquinol + NADP(+) + n H(+)(out). NDH-1 shuttles electrons from an unknown electron donor, via FMN and iron-sulfur (Fe-S) centers, to quinones in the respiratory and/or the photosynthetic chain. The immediate electron acceptor for the enzyme in this species is believed to be plastoquinone. Couples the redox reaction to proton translocation, and thus conserves the redox energy in a proton gradient. This Rippkaea orientalis (strain PCC 8801 / RF-1) (Cyanothece sp. (strain PCC 8801)) protein is NAD(P)H-quinone oxidoreductase subunit I.